Reading from the N-terminus, the 108-residue chain is Small ribosomal subunit protein uS10 (108 aa).

This sequence belongs to the universal ribosomal protein uS10 family. Part of the 30S ribosomal subunit.

Involved in the binding of tRNA to the ribosomes. This is Small ribosomal subunit protein uS10 from Mycoplasma pneumoniae (strain ATCC 29342 / M129 / Subtype 1) (Mycoplasmoides pneumoniae).